A 219-amino-acid polypeptide reads, in one-letter code: ADP-sugar pyrophosphatase (219 aa).

An N-acetylmethionine modification is found at methionine 1. Phosphoserine is present on residues serine 3 and serine 10. Tryptophan 28 is a binding site for substrate. Lysine 42 participates in a covalent cross-link: Glycyl lysine isopeptide (Lys-Gly) (interchain with G-Cter in SUMO2). Threonine 45 is modified (phosphothreonine). Residues 46-47 (WE) and arginine 51 each bind substrate. Residues 57 to 197 (QTADGVAVIP…EEHLTVDARV (141 aa)) form the Nudix hydrolase domain. Tyrosine 74 bears the Phosphotyrosine mark. Arginine 84 is a substrate binding site. Alanine 96 is a Mg(2+) binding site. A Nudix box motif is present at residues 97–118 (GLIDDGETPEAAALRELEEETG). Substrate is bound at residue leucine 98. Mg(2+)-binding residues include glutamate 112 and glutamate 116. Position 133 (aspartate 133) interacts with substrate. Mg(2+) is bound at residue glutamate 166. An N6-acetyllysine mark is found at lysine 210 and lysine 218.

This sequence belongs to the Nudix hydrolase family. As to quaternary structure, homodimer. Interacts with PARG. Requires Mg(2+) as cofactor. Post-translationally, phosphorylation at Thr-45 is required for homodimer stability; dephosphorylation results in destabilization of the homodimer. Dephosphorylation at Thr-45 promotes the ATP-synthesis activity. In terms of tissue distribution, widely expressed. Most abundant in liver.

The protein localises to the nucleus. The enzyme catalyses D-ribose 5-phosphate + ATP + H(+) = ADP-D-ribose + diphosphate. It catalyses the reaction ADP-D-ribose + H2O = D-ribose 5-phosphate + AMP + 2 H(+). It carries out the reaction 8-oxo-dGDP + H2O = 8-oxo-dGMP + phosphate + H(+). In terms of biological role, enzyme that can either act as an ADP-sugar pyrophosphatase in absence of diphosphate or catalyze the synthesis of ATP in presence of diphosphate. In absence of diphosphate, hydrolyzes with similar activities various modified nucleoside diphosphates such as ADP-ribose, ADP-mannose, ADP-glucose, 8-oxo-GDP and 8-oxo-dGDP. Can also hydrolyze other nucleotide sugars with low activity. In presence of diphosphate, mediates the synthesis of ATP in the nucleus by catalyzing the conversion of ADP-ribose to ATP and ribose 5-phosphate. Nuclear ATP synthesis takes place when dephosphorylated at Thr-45. Nuclear ATP generation is required for extensive chromatin remodeling events that are energy-consuming. Does not play a role in U8 snoRNA decapping activity. Binds U8 snoRNA. The sequence is that of ADP-sugar pyrophosphatase (NUDT5) from Homo sapiens (Human).